Reading from the N-terminus, the 72-residue chain is ATP synthase protein 8 (72 aa).

The chain crosses the membrane as a helical span at residues 16 to 36 (WTLIALFLLFSFLVVSVLPAV).

This sequence belongs to the ATPase protein 8 family. As to quaternary structure, F-type ATPases have 2 components, CF(1) - the catalytic core - and CF(0) - the membrane proton channel.

The protein resides in the mitochondrion membrane. Functionally, mitochondrial membrane ATP synthase (F(1)F(0) ATP synthase or Complex V) produces ATP from ADP in the presence of a proton gradient across the membrane which is generated by electron transport complexes of the respiratory chain. F-type ATPases consist of two structural domains, F(1) - containing the extramembraneous catalytic core and F(0) - containing the membrane proton channel, linked together by a central stalk and a peripheral stalk. During catalysis, ATP synthesis in the catalytic domain of F(1) is coupled via a rotary mechanism of the central stalk subunits to proton translocation. Part of the complex F(0) domain. Minor subunit located with subunit a in the membrane. The sequence is that of ATP synthase protein 8 (MTATP8) from Metridium senile (Brown sea anemone).